Consider the following 151-residue polypeptide: MAPKAEKKPAAKKPAEEEPATEKVEKAPAGKKPKAEKRLPAGKSKEGGEGKKGKKKAKKSVETYKIYIFKVLKQVHPDIGISSKAMSIMNSFINDIFEKLAAESAKLARYNKKPTITSREIQTSVRLVLPGELAKHAVSEGTKAVTKFTSS.

2 stretches are compositionally biased toward basic and acidic residues: residues 1 to 28 (MAPKAEKKPAAKKPAEEEPATEKVEKAP) and 36 to 51 (EKRLPAGKSKEGGEGK). Residues 1–58 (MAPKAEKKPAAKKPAEEEPATEKVEKAPAGKKPKAEKRLPAGKSKEGGEGKKGKKKAK) are disordered. 2 positions are modified to N6-acetyllysine: K7 and K37. K147 participates in a covalent cross-link: Glycyl lysine isopeptide (Lys-Gly) (interchain with G-Cter in ubiquitin).

It belongs to the histone H2B family. In terms of assembly, the nucleosome is a histone octamer containing two molecules each of H2A, H2B, H3 and H4 assembled in one H3-H4 heterotetramer and two H2A-H2B heterodimers. The octamer wraps approximately 147 bp of DNA. Can be acetylated to form H2BK6ac and H2BK33ac. In terms of processing, monoubiquitinated to form H2BK143ub1; may give a specific tag for epigenetic transcriptional activation.

It localises to the nucleus. The protein localises to the chromosome. Functionally, core component of nucleosome. Nucleosomes wrap and compact DNA into chromatin, limiting DNA accessibility to the cellular machineries which require DNA as a template. Histones thereby play a central role in transcription regulation, DNA repair, DNA replication and chromosomal stability. DNA accessibility is regulated via a complex set of post-translational modifications of histones, also called histone code, and nucleosome remodeling. This is Histone H2B.1 from Zea mays (Maize).